Consider the following 421-residue polypeptide: Lipid II:glycine glycyltransferase (421 aa).

It belongs to the FemABX family. As to quaternary structure, monomer.

It localises to the cytoplasm. It carries out the reaction beta-D-GlcNAc-(1-&gt;4)-Mur2Ac(oyl-L-Ala-D-isoglutaminyl-L-Lys-D-Ala-D-Ala)-di-trans,octa-cis-undecaprenyl diphosphate + glycyl-tRNA(Gly) = beta-D-GlcNAc-(1-&gt;4)-Mur2Ac(oyl-L-Ala-D-isoglutaminyl-L-Lys-(N(6)-Gly)-D-Ala-D-Ala)-di-trans,octa-cis-undecaprenyl diphosphate + tRNA(Gly) + H(+). Catalyzes the incorporation of the first glycine of the pentaglycine interpeptide bridge, which is characteristic of the S.aureus peptidoglycan. This glycine is added to the epsilon-amino group of the L-lysine of the membrane-bound lipid II intermediate (GlcNAc-(beta-1,4)-N-acetylmuramic acid(-L-Ala-D-iGln-L-Lys-D-Ala-D-Ala)-pyrophosphoryl-undecaprenol), using glycyl-tRNA(Gly) as donor, in a ribosome-independent mechanism. This Staphylococcus aureus (strain bovine RF122 / ET3-1) protein is Lipid II:glycine glycyltransferase (femX).